The sequence spans 290 residues: UPF0761 membrane protein YihY (290 aa).

6 helical membrane passes run 44-64, 104-124, 140-160, 183-203, 210-230, and 244-264; these read LLSLVPLVAVVFALFAAFPMF, VGACGLIVTALLLMYSIDSAL, FAVYWMILTLGPLLAGASLAI, IFPLLLSWISFWLLYSIVPTI, AIVGAFVAALLFEAGKKGFAL, and VLAVIPILFVWVYWTWCIVLL.

This sequence belongs to the UPF0761 family.

It is found in the cell inner membrane. The sequence is that of UPF0761 membrane protein YihY from Shigella boydii serotype 4 (strain Sb227).